A 71-amino-acid polypeptide reads, in one-letter code: MKEKNIEMQGTVIDTLPNTTFKVELENKHIVIAHISGKMRKNYIRILTGDKVTLELTPYDLSKGRIIFRSR.

An S1-like domain is found at 1 to 71 (MKEKNIEMQG…SKGRIIFRSR (71 aa)).

This sequence belongs to the IF-1 family. As to quaternary structure, component of the 30S ribosomal translation pre-initiation complex which assembles on the 30S ribosome in the order IF-2 and IF-3, IF-1 and N-formylmethionyl-tRNA(fMet); mRNA recruitment can occur at any time during PIC assembly.

The protein localises to the cytoplasm. One of the essential components for the initiation of protein synthesis. Stabilizes the binding of IF-2 and IF-3 on the 30S subunit to which N-formylmethionyl-tRNA(fMet) subsequently binds. Helps modulate mRNA selection, yielding the 30S pre-initiation complex (PIC). Upon addition of the 50S ribosomal subunit IF-1, IF-2 and IF-3 are released leaving the mature 70S translation initiation complex. The chain is Translation initiation factor IF-1 from Buchnera aphidicola subsp. Cinara cedri (strain Cc).